The chain runs to 872 residues: Alanine--tRNA ligase (872 aa).

The Zn(2+) site is built by H567, H571, C669, and H673.

This sequence belongs to the class-II aminoacyl-tRNA synthetase family. Zn(2+) serves as cofactor.

It localises to the cytoplasm. The catalysed reaction is tRNA(Ala) + L-alanine + ATP = L-alanyl-tRNA(Ala) + AMP + diphosphate. Catalyzes the attachment of alanine to tRNA(Ala) in a two-step reaction: alanine is first activated by ATP to form Ala-AMP and then transferred to the acceptor end of tRNA(Ala). Also edits incorrectly charged Ser-tRNA(Ala) and Gly-tRNA(Ala) via its editing domain. This is Alanine--tRNA ligase from Streptococcus pyogenes serotype M5 (strain Manfredo).